The following is a 99-amino-acid chain: UPF0235 protein Avin_03050 (99 aa).

A disordered region spans residues 66–99 (VSLESGESNRQKRVRIRRPRQLPALPGLAPRPDA). Positions 76-85 (QKRVRIRRPR) are enriched in basic residues.

The protein belongs to the UPF0235 family.

The protein is UPF0235 protein Avin_03050 of Azotobacter vinelandii (strain DJ / ATCC BAA-1303).